Reading from the N-terminus, the 217-residue chain is uncharacterized protein (217 aa).

This is an uncharacterized protein from Escherichia coli.